The sequence spans 577 residues: Isocitrate dehydrogenase kinase/phosphatase (577 aa).

Residues 324 to 330 (APGIRGL) and lysine 345 contribute to the ATP site. Aspartate 380 is an active-site residue.

Belongs to the AceK family.

Its subcellular location is the cytoplasm. The catalysed reaction is L-seryl-[isocitrate dehydrogenase] + ATP = O-phospho-L-seryl-[isocitrate dehydrogenase] + ADP + H(+). Its function is as follows. Bifunctional enzyme which can phosphorylate or dephosphorylate isocitrate dehydrogenase (IDH) on a specific serine residue. This is a regulatory mechanism which enables bacteria to bypass the Krebs cycle via the glyoxylate shunt in response to the source of carbon. When bacteria are grown on glucose, IDH is fully active and unphosphorylated, but when grown on acetate or ethanol, the activity of IDH declines drastically concomitant with its phosphorylation. The chain is Isocitrate dehydrogenase kinase/phosphatase from Pseudoalteromonas atlantica (strain T6c / ATCC BAA-1087).